An 809-amino-acid polypeptide reads, in one-letter code: Probable disease resistance protein At5g66900 (809 aa).

Positions 1–150 (MNDWASLGIG…LSKRMDLLSV (150 aa)) constitute an RPW8 domain. Residues 50–86 (PLTQKIDSMQKELDFGVKELKELRDTIERADVAVRKF) adopt a coiled-coil conformation. 2 consecutive NB-ARC domains span residues 153-280 (PVFR…DDVW) and 339-438 (SPDE…DMWV). 194 to 201 (APPGCGKT) serves as a coordination point for ATP. Positions 494 to 515 (QSEFKENLERKRLNLEILENTF) form a coiled coil. 4 LRR repeats span residues 650-672 (KLQE…ISEI), 674-696 (SLKT…IGNL), 698-720 (RLEV…TEGL), and 722-744 (NLRF…IGKL).

Belongs to the disease resistance NB-LRR family.

Its function is as follows. Probable disease resistance protein. This chain is Probable disease resistance protein At5g66900, found in Arabidopsis thaliana (Mouse-ear cress).